We begin with the raw amino-acid sequence, 314 residues long: tRNA dimethylallyltransferase (314 aa).

12–19 (GPTAGGKS) contributes to the ATP binding site. 14 to 19 (TAGGKS) contacts substrate. The interaction with substrate tRNA stretch occupies residues 37 to 40 (DSMQ).

Belongs to the IPP transferase family. As to quaternary structure, monomer. It depends on Mg(2+) as a cofactor.

The enzyme catalyses adenosine(37) in tRNA + dimethylallyl diphosphate = N(6)-dimethylallyladenosine(37) in tRNA + diphosphate. Functionally, catalyzes the transfer of a dimethylallyl group onto the adenine at position 37 in tRNAs that read codons beginning with uridine, leading to the formation of N6-(dimethylallyl)adenosine (i(6)A). This is tRNA dimethylallyltransferase from Rhodospirillum centenum (strain ATCC 51521 / SW).